The chain runs to 335 residues: Acyl-CoA Delta(11) desaturase (335 aa).

Transmembrane regions (helical) follow at residues 39–59, 64–84, and 98–118; these read LLTF…CFTS, TIIL…AGAH, and LQII…IHWI. The Histidine box-1 motif lies at 84–89; the sequence is HRLWAH. A Histidine box-2 motif is present at residues 121-125; it reads HRMHH. The next 2 membrane-spanning stretches (helical) occupy residues 182–202 and 213–235; these read AIPF…MYFW and TMLR…HLYG. A Histidine box-3 motif is present at residues 261–265; that stretch reads HNYHH. Positions 312–335 are disordered; the sequence is MKRTGDGTDVSGQKYSCESSEVLQ. Residues 321–335 show a composition bias toward polar residues; it reads VSGQKYSCESSEVLQ.

Belongs to the fatty acid desaturase type 1 family. Fe cation is required as a cofactor. Detected in pheromone gland.

It localises to the membrane. The enzyme catalyses an 11,12-saturated fatty acyl-CoA + 2 Fe(II)-[cytochrome b5] + O2 + 2 H(+) = an (11Z)-Delta(11)-fatty acyl-CoA + 2 Fe(III)-[cytochrome b5] + 2 H2O. Catalyzes the formation of Delta(11) fatty acyl precursors in the pheromone gland, with a preference for myristic acid. This chain is Acyl-CoA Delta(11) desaturase, found in Choristoneura rosaceana (Oblique banded leafroller).